The sequence spans 288 residues: Bifunctional protein FolD (288 aa).

Residues 166 to 168 (GRS), Ser-191, and Ile-232 each bind NADP(+).

The protein belongs to the tetrahydrofolate dehydrogenase/cyclohydrolase family. In terms of assembly, homodimer.

It catalyses the reaction (6R)-5,10-methylene-5,6,7,8-tetrahydrofolate + NADP(+) = (6R)-5,10-methenyltetrahydrofolate + NADPH. It carries out the reaction (6R)-5,10-methenyltetrahydrofolate + H2O = (6R)-10-formyltetrahydrofolate + H(+). Its pathway is one-carbon metabolism; tetrahydrofolate interconversion. In terms of biological role, catalyzes the oxidation of 5,10-methylenetetrahydrofolate to 5,10-methenyltetrahydrofolate and then the hydrolysis of 5,10-methenyltetrahydrofolate to 10-formyltetrahydrofolate. In Rickettsia rickettsii (strain Iowa), this protein is Bifunctional protein FolD.